The following is a 525-amino-acid chain: Cysteine--tRNA ligase (525 aa).

A Zn(2+)-binding site is contributed by Cys49. The 'HIGH' region motif lies at 51–61; sequence VTVYDLCHLGH. Zn(2+) contacts are provided by Cys258, His283, and Glu287. The 'KMSKS' region signature appears at 315–319; that stretch reads KMSKS. An ATP-binding site is contributed by Lys318.

It belongs to the class-I aminoacyl-tRNA synthetase family. Monomer. The cofactor is Zn(2+).

The protein localises to the cytoplasm. It carries out the reaction tRNA(Cys) + L-cysteine + ATP = L-cysteinyl-tRNA(Cys) + AMP + diphosphate. This Synechococcus sp. (strain JA-2-3B'a(2-13)) (Cyanobacteria bacterium Yellowstone B-Prime) protein is Cysteine--tRNA ligase.